We begin with the raw amino-acid sequence, 346 residues long: Melanoma-associated antigen B3 (346 aa).

The segment at 1 to 35 is disordered; it reads MPRGQKSTLHAREKRQQTRGQTQDHQGAQITATNK. Residues 18–33 show a composition bias toward polar residues; the sequence is TRGQTQDHQGAQITAT. Residues 111–310 enclose the MAGE domain; sequence LIMKTNMLVQ…SAFQFWYEEA (200 aa).

As to expression, expressed in testis.

This is Melanoma-associated antigen B3 (MAGEB3) from Homo sapiens (Human).